A 375-amino-acid polypeptide reads, in one-letter code: Enoyl-[acyl-carrier-protein] reductase, mitochondrial (375 aa).

A mitochondrion-targeting transit peptide spans 1-37 (MAALMESVVGRALKFSSTANFRSIRRGETPTLCIKSF). The Proton donor role is filled by tyrosine 96. Residues asparagine 169, 195 to 198 (TSIV), 218 to 220 (RDR), 287 to 290 (YGGM), 312 to 314 (FWL), and lysine 370 contribute to the NADP(+) site.

This sequence belongs to the zinc-containing alcohol dehydrogenase family. Quinone oxidoreductase subfamily. As to quaternary structure, homodimer.

The protein resides in the mitochondrion. It catalyses the reaction a 2,3-saturated acyl-[ACP] + NADP(+) = a (2E)-enoyl-[ACP] + NADPH + H(+). In terms of biological role, catalyzes the NADPH-dependent reduction of trans-2-enoyl thioesters in mitochondrial fatty acid synthesis (fatty acid synthesis type II). Fatty acid chain elongation in mitochondria uses acyl carrier protein (ACP) as an acyl group carrier, but the enzyme accepts both ACP and CoA thioesters as substrates in vitro. The sequence is that of Enoyl-[acyl-carrier-protein] reductase, mitochondrial from Arabidopsis thaliana (Mouse-ear cress).